The primary structure comprises 373 residues: 8-amino-7-oxononanoate synthase (373 aa).

Position 16 (Arg-16) interacts with substrate. Position 93 to 94 (93 to 94 (GF)) interacts with pyridoxal 5'-phosphate. Position 118 (His-118) interacts with substrate. Residues Ser-165, 190–193 (DEAH), and 222–225 (TFSK) each bind pyridoxal 5'-phosphate. An N6-(pyridoxal phosphate)lysine modification is found at Lys-225. Residue Thr-334 participates in substrate binding.

Belongs to the class-II pyridoxal-phosphate-dependent aminotransferase family. BioF subfamily. In terms of assembly, homodimer. Requires pyridoxal 5'-phosphate as cofactor.

It carries out the reaction 6-carboxyhexanoyl-[ACP] + L-alanine + H(+) = (8S)-8-amino-7-oxononanoate + holo-[ACP] + CO2. It participates in cofactor biosynthesis; biotin biosynthesis. Catalyzes the decarboxylative condensation of pimeloyl-[acyl-carrier protein] and L-alanine to produce 8-amino-7-oxononanoate (AON), [acyl-carrier protein], and carbon dioxide. This Helicobacter pylori (strain ATCC 700392 / 26695) (Campylobacter pylori) protein is 8-amino-7-oxononanoate synthase.